A 247-amino-acid chain; its full sequence is tRNA uridine(34) hydroxylase (247 aa).

The region spanning 124–218 (TKQNVIVIDT…YLEDTQNKNN (95 aa)) is the Rhodanese domain. C178 functions as the Cysteine persulfide intermediate in the catalytic mechanism.

It belongs to the TrhO family.

The catalysed reaction is uridine(34) in tRNA + AH2 + O2 = 5-hydroxyuridine(34) in tRNA + A + H2O. In terms of biological role, catalyzes oxygen-dependent 5-hydroxyuridine (ho5U) modification at position 34 in tRNAs. The chain is tRNA uridine(34) hydroxylase from Rickettsia akari (strain Hartford).